A 426-amino-acid chain; its full sequence is Histone-binding protein RBBP7 (426 aa).

Ala2 carries the N-acetylalanine modification. Ser3 is modified (phosphoserine). At Lys4 the chain carries N6-acetyllysine; alternate. Lys4 is covalently cross-linked (Glycyl lysine isopeptide (Lys-Gly) (interchain with G-Cter in SUMO2); alternate). Residue Lys4 forms a Glycyl lysine isopeptide (Lys-Gly) (interchain with G-Cter in ubiquitin); alternate linkage. At Thr10 the chain carries Phosphothreonine. 7 WD repeats span residues 47-122, 128-173, 181-217, 228-269, 275-312, 318-370, and 377-404; these read QWLP…KINH, RARY…LRLR, GLSW…KIVD, VVED…HLVD, VNCL…LHTF, EIFQ…LFIH, and ISDF…IWQM. A Phosphoserine modification is found at Ser95. Residue Lys101 forms a Glycyl lysine isopeptide (Lys-Gly) (interchain with G-Cter in SUMO2) linkage. The residue at position 119 (Lys119) is an N6-acetyllysine. Residue Lys155 forms a Glycyl lysine isopeptide (Lys-Gly) (interchain with G-Cter in SUMO2) linkage. Lys159 bears the N6-acetyllysine; alternate mark. Lys159 participates in a covalent cross-link: Glycyl lysine isopeptide (Lys-Gly) (interchain with G-Cter in SUMO2); alternate. At Ser355 the chain carries Phosphoserine.

This sequence belongs to the WD repeat RBAP46/RBAP48/MSI1 family. Binds directly to helix 1 of the histone fold of histone H4, a region that is not accessible when H4 is in chromatin. Subunit of the type B histone acetyltransferase (HAT) complex, composed of RBBP7 and HAT1. Subunit of the core histone deacetylase (HDAC) complex, which is composed of HDAC1, HDAC2, RBBP4 and RBBP7. The core HDAC complex associates with SIN3A, ARID4B/SAP180, SAP18, SAP30, SAP130, SUDS3/SAP45 and possibly ARID4A/RBP1 and ING1 to form the SIN3 HDAC complex. Component of the nucleosome remodeling and deacetylase (NuRD) repressor complex, composed of core proteins MTA1, MTA2, MTA3, RBBP4, RBBP7, HDAC1, HDAC2, MBD2, MBD3, and peripherally associated proteins CDK2AP1, CDK2AP2, GATAD2A, GATAD2B, CHD3, CHD4 and CHD5. The exact stoichiometry of the NuRD complex is unknown, and some subunits such as MBD2 and MBD3, GATAD2A and GATAD2B, and CHD3, CHD4 and CHD5 define mutually exclusive NuRD complexes. The NuRD complex may interact with MBD3L1. The NuRD complex may interact with MBD3L2. Subunit of the PRC2/EED-EZH2 complex, which is composed of at least EED, EZH2, RBBP4, RBBP7 and SUZ12. The PRC2/EED-EZH2 complex may also associate with HDAC1. Component of the NURF-1 ISWI chromatin remodeling complex (also called the nucleosome-remodeling factor (NURF) complex) at least composed of SMARCA1, BPTF, RBBP4 and RBBP7. Within the complex interacts with SMARCA1. Component of the BPFT-SMARCA1 complex at least composed of SMARCA1, BPFT, RBBP4 and RBBP7; the complex is catalytically inactive and does not remodel chromatin. Within the complex interacts with SMARCA1. Interacts with BRCA1. Interacts with CDK2AP1. Interacts with CENPA. Interacts with CHD3. Interacts with CHD4. Interacts with CREBBP, and this interaction may be enhanced by the binding of phosphorylated CREB1 to CREBBP. Interacts with HDAC7. Interacts with MTA1. Interacts with PWWP2B. Interacts with RB1 (via viral protein-binding domain). Interacts with SUV39H1.

It is found in the nucleus. In terms of biological role, core histone-binding subunit that may target chromatin remodeling factors, histone acetyltransferases and histone deacetylases to their histone substrates in a manner that is regulated by nucleosomal DNA. Component of several complexes which regulate chromatin metabolism. These include the type B histone acetyltransferase (HAT) complex, which is required for chromatin assembly following DNA replication; the core histone deacetylase (HDAC) complex, which promotes histone deacetylation and consequent transcriptional repression; the nucleosome remodeling and histone deacetylase complex (the NuRD complex), which promotes transcriptional repression by histone deacetylation and nucleosome remodeling; and the PRC2/EED-EZH2 complex, which promotes repression of homeotic genes during development; and the NURF (nucleosome remodeling factor) complex. The protein is Histone-binding protein RBBP7 (RBBP7) of Pongo abelii (Sumatran orangutan).